A 446-amino-acid polypeptide reads, in one-letter code: Dihydroorotate dehydrogenase (quinone), mitochondrial (446 aa).

The transit peptide at 1–13 (MHSRPLPTLGRHA) directs the protein to the mitochondrion. Residues 40 to 57 (AILYTAGILGGAFAGYYL) form a helical membrane-spanning segment. Residues 125–129 (AGLDK) and Ser-149 each bind FMN. Lys-129 contributes to the substrate binding site. 174-178 (NRYGF) provides a ligand contact to substrate. Residues Asn-222 and Asn-252 each contribute to the FMN site. Substrate is bound by residues Asn-252 and 252 to 257 (NVSSPN). The active-site Nucleophile is Ser-255. Residues Lys-303 and Ser-331 each contribute to the FMN site. 332 to 333 (NT) contributes to the substrate binding site. Residues Gly-357, Gly-387, and 408–409 (YT) each bind FMN.

It belongs to the dihydroorotate dehydrogenase family. Type 2 subfamily. Requires FMN as cofactor.

The protein localises to the mitochondrion inner membrane. The catalysed reaction is (S)-dihydroorotate + a quinone = orotate + a quinol. The protein operates within pyrimidine metabolism; UMP biosynthesis via de novo pathway; orotate from (S)-dihydroorotate (quinone route): step 1/1. Its activity is regulated as follows. The activity is dependent of the presence of oxygen. Functionally, catalyzes the conversion of dihydroorotate to orotate with quinone as electron acceptor. The chain is Dihydroorotate dehydrogenase (quinone), mitochondrial (URA9) from Lachancea kluyveri (strain ATCC 58438 / CBS 3082 / BCRC 21498 / NBRC 1685 / JCM 7257 / NCYC 543 / NRRL Y-12651) (Yeast).